The following is an 87-amino-acid chain: uncharacterized protein (87 aa).

To H.pylori HP0495/JHP0447.

This is an uncharacterized protein from Campylobacter jejuni subsp. jejuni serotype O:2 (strain ATCC 700819 / NCTC 11168).